Consider the following 235-residue polypeptide: tRNA (guanine-N(1)-)-methyltransferase (235 aa).

Residues G114 and 134–139 (IGDYIL) contribute to the S-adenosyl-L-methionine site.

Belongs to the RNA methyltransferase TrmD family. As to quaternary structure, homodimer.

It localises to the cytoplasm. The catalysed reaction is guanosine(37) in tRNA + S-adenosyl-L-methionine = N(1)-methylguanosine(37) in tRNA + S-adenosyl-L-homocysteine + H(+). Functionally, specifically methylates guanosine-37 in various tRNAs. In Ehrlichia canis (strain Jake), this protein is tRNA (guanine-N(1)-)-methyltransferase.